We begin with the raw amino-acid sequence, 215 residues long: Octanoyltransferase (215 aa).

Positions 31–206 (PDSQDEIWLV…QLVKHLDYAE (176 aa)) constitute a BPL/LPL catalytic domain. Substrate is bound by residues 70 to 77 (RGGQVTYH), 137 to 139 (SLG), and 150 to 152 (GLA). The Acyl-thioester intermediate role is filled by Cys-168.

It belongs to the LipB family.

The protein localises to the cytoplasm. It carries out the reaction octanoyl-[ACP] + L-lysyl-[protein] = N(6)-octanoyl-L-lysyl-[protein] + holo-[ACP] + H(+). The protein operates within protein modification; protein lipoylation via endogenous pathway; protein N(6)-(lipoyl)lysine from octanoyl-[acyl-carrier-protein]: step 1/2. Catalyzes the transfer of endogenously produced octanoic acid from octanoyl-acyl-carrier-protein onto the lipoyl domains of lipoate-dependent enzymes. Lipoyl-ACP can also act as a substrate although octanoyl-ACP is likely to be the physiological substrate. The sequence is that of Octanoyltransferase from Pseudomonas putida (strain W619).